The sequence spans 197 residues: Probable nicotinate-nucleotide adenylyltransferase (197 aa).

Belongs to the NadD family.

It carries out the reaction nicotinate beta-D-ribonucleotide + ATP + H(+) = deamido-NAD(+) + diphosphate. It functions in the pathway cofactor biosynthesis; NAD(+) biosynthesis; deamido-NAD(+) from nicotinate D-ribonucleotide: step 1/1. In terms of biological role, catalyzes the reversible adenylation of nicotinate mononucleotide (NaMN) to nicotinic acid adenine dinucleotide (NaAD). The protein is Probable nicotinate-nucleotide adenylyltransferase of Bordetella avium (strain 197N).